A 185-amino-acid chain; its full sequence is Shikimate kinase (185 aa).

12–17 serves as a coordination point for ATP; it reads GSGKTT. Thr-16 contributes to the Mg(2+) binding site. Asp-34, Arg-58, and Gly-79 together coordinate substrate. Arg-116 provides a ligand contact to ATP. Substrate is bound at residue Arg-135.

The protein belongs to the shikimate kinase family. In terms of assembly, monomer. It depends on Mg(2+) as a cofactor.

The protein resides in the cytoplasm. It catalyses the reaction shikimate + ATP = 3-phosphoshikimate + ADP + H(+). It functions in the pathway metabolic intermediate biosynthesis; chorismate biosynthesis; chorismate from D-erythrose 4-phosphate and phosphoenolpyruvate: step 5/7. Its function is as follows. Catalyzes the specific phosphorylation of the 3-hydroxyl group of shikimic acid using ATP as a cosubstrate. The chain is Shikimate kinase from Corynebacterium jeikeium (strain K411).